Here is an 808-residue protein sequence, read N- to C-terminus: Type VI secretion system spike protein VgrG4b (808 aa).

This sequence belongs to the VgrG protein family.

It is found in the secreted. Part of the H2 type VI secretion system (H2-T6SS) specialized secretion system, which delivers several virulence factors in both prokaryotic and eukaryotic cells during infection. Allows the delivery of the phospholipase effector PldA to target cells where it exerts its toxicity. This Pseudomonas aeruginosa (strain ATCC 15692 / DSM 22644 / CIP 104116 / JCM 14847 / LMG 12228 / 1C / PRS 101 / PAO1) protein is Type VI secretion system spike protein VgrG4b.